Reading from the N-terminus, the 152-residue chain is Deoxyuridine 5'-triphosphate nucleotidohydrolase (152 aa).

Substrate-binding positions include 71-73, N84, 88-90, and M98; these read RSG and LID.

It belongs to the dUTPase family. Mg(2+) is required as a cofactor.

It carries out the reaction dUTP + H2O = dUMP + diphosphate + H(+). The protein operates within pyrimidine metabolism; dUMP biosynthesis; dUMP from dCTP (dUTP route): step 2/2. Functionally, this enzyme is involved in nucleotide metabolism: it produces dUMP, the immediate precursor of thymidine nucleotides and it decreases the intracellular concentration of dUTP so that uracil cannot be incorporated into DNA. This chain is Deoxyuridine 5'-triphosphate nucleotidohydrolase, found in Salmonella arizonae (strain ATCC BAA-731 / CDC346-86 / RSK2980).